Consider the following 110-residue polypeptide: UPF0145 protein LMOf2365_0219 (110 aa).

This sequence belongs to the UPF0145 family.

This is UPF0145 protein LMOf2365_0219 from Listeria monocytogenes serotype 4b (strain F2365).